A 209-amino-acid chain; its full sequence is High mobility group protein B2 (209 aa).

N6-acetyllysine is present on K3. Positions 9–79 (PRGKMSSYAF…RYDREMKNYV (71 aa)) form a DNA-binding region, HMG box 1. At C23 the chain carries Cysteine sulfonic acid (-SO3H); alternate. A disulfide bridge links C23 with C45. K30 is modified (N6-acetyllysine). Residue S35 is modified to Phosphoserine. Residue K43 is modified to N6-acetyllysine. Cysteine sulfonic acid (-SO3H); alternate is present on C45. The segment covering 52-76 (MSAKEKSKFEDMAKSDKARYDREMK) has biased composition (basic and acidic residues). 2 disordered regions span residues 52–150 (MSAK…KAAK) and 162–209 (YRAK…EDEE). At K90 the chain carries N6-acetyllysine. Positions 95–163 (PKRPPSAFFL…KYEKDIAAYR (69 aa)) form a DNA-binding region, HMG box 2. S100 is modified (phosphoserine). C106 carries the post-translational modification Cysteine sulfonic acid (-SO3H). 3 stretches are compositionally biased toward basic and acidic residues: residues 107–117 (SEHRPKIKSEH), 137–150 (SAKD…KAAK), and 162–172 (YRAKGKSEAGK). N6-acetyllysine is present on residues K114 and K141. Residues 165–180 (KGKSEAGKKGPGRPTG) are required for chemotactic activity. The segment covering 187–209 (PEDEEEEEEEEDEDEEEEDEDEE) has biased composition (acidic residues).

The protein belongs to the HMGB family. Interacts with POU2F2, POU2F1 and POU3F1. Component of the RAG complex composed of core components RAG1 and RAG2, and associated component HMGB1 or HMGB2. Component of the SET complex, composed of at least ANP32A, APEX1, HMGB2, NME1, SET and TREX1. Directly interacts with SET. Interacts with LEF1. Reduction/oxidation of cysteine residues Cys-23, Cys-45 and Cys-106 and a possible intramolecular disulfide bond involving Cys-23 and Cys-45 give rise to different redox forms with specific functional activities in various cellular compartments: 1- fully reduced HMGB2 (HMGB2C23hC45hC106h), 2- disulfide HMGB2 (HMGB2C23-C45C106h) and 3- sulfonyl HMGB2 (HMGB2C23soC45soC106so).

It localises to the nucleus. The protein localises to the chromosome. Its subcellular location is the cytoplasm. It is found in the secreted. Multifunctional protein with various roles in different cellular compartments. May act in a redox sensitive manner. In the nucleus is an abundant chromatin-associated non-histone protein involved in transcription, chromatin remodeling and V(D)J recombination and probably other processes. Binds DNA with a preference to non-canonical DNA structures such as single-stranded DNA. Can bent DNA and enhance DNA flexibility by looping thus providing a mechanism to promote activities on various gene promoters by enhancing transcription factor binding and/or bringing distant regulatory sequences into close proximity. Involved in V(D)J recombination by acting as a cofactor of the RAG complex: acts by stimulating cleavage and RAG protein binding at the 23 bp spacer of conserved recombination signal sequences (RSS). Proposed to be involved in the innate immune response to nucleic acids by acting as a cytoplasmic promiscuous immunogenic DNA/RNA sensor which cooperates with subsequent discriminative sensing by specific pattern recognition receptors. In the extracellular compartment acts as a chemokine. Promotes proliferation and migration of endothelial cells implicating AGER/RAGE. Has antimicrobial activity in gastrointestinal epithelial tissues. Involved in inflammatory response to antigenic stimulus coupled with pro-inflammatory activity. May play a role in germ cell differentiation. Involved in modulation of neurogenesis probably by regulation of neural stem proliferation. Involved in articular cartilage surface maintenance implicating LEF1 and the Wnt/beta-catenin pathway. The sequence is that of High mobility group protein B2 (HMGB2) from Bos taurus (Bovine).